Reading from the N-terminus, the 570-residue chain is MALKKSSPSLDSGDSDSEELPTFAFLKKEPSSTKRRQPEREEKIVVVDISDCEASCPPAPELFSPPVPEIAETVTQTQPVRLLSSESEDEEEFIPLAQRLTCKFLTHKQLSPEDSSSPVKSVLDHQNNEGASCDWKKPFPKIPEVPLHDTPERSAADNKDLILDPCCQLPAYLSTCPGQSSSLAVTKTNSDILPPQKKTKPSQKVQGRGSHGCRQQRQARQKESTLRRQERKNAALVTRMKAQRPEECLKHIIVVLDPVLLQMEGGGQLLGALQTMECRCVIEAQAVPCSVTWRRRAGPSEDREDWVEEPTVLVLLRAEAFVSMIDNGKQGSLDSTMKGKETLQGFVTDITAKTAGKALSLVIVDQEKCFSAQNPPRRGKQGANKQTKKQQQRQPEASIGSMVSRVDAEEALVDLQLHTEAQAQIVQSWKELADFTCAFTKAVAEAPFKKLRDETTFSFCLESDWAGGVKVDLAGRGLALVWRRQIQQLNRVSLEMASAVVNAYPSPQLLVQAYQQCFSDKERQNLLADIQVRRGEGVTSTSRRIGPELSRRIYLQMTTLQPHLSLDSAD.

Over residues 1–12 (MALKKSSPSLDS) the composition is skewed to low complexity. Residues 1 to 42 (MALKKSSPSLDSGDSDSEELPTFAFLKKEPSSTKRRQPEREE) are disordered. Phosphoserine occurs at positions 12 and 15. Residues 26-42 (LKKEPSSTKRRQPEREE) are compositionally biased toward basic and acidic residues. Residues Ser84, Ser85, and Ser87 each carry the phosphoserine modification. Residue Lys103 forms a Glycyl lysine isopeptide (Lys-Gly) (interchain with G-Cter in SUMO2) linkage. Residues Ser111 and Ser117 each carry the phosphoserine modification. Glycyl lysine isopeptide (Lys-Gly) (interchain with G-Cter in SUMO2) cross-links involve residues Lys136 and Lys141. Thr150 is modified (phosphothreonine). Disordered stretches follow at residues 187-233 (KTNS…ERKN) and 372-400 (AQNPPRRGKQGANKQTKKQQQRQPEASIG). The span at 220 to 233 (RQKESTLRRQERKN) shows a compositional bias: basic and acidic residues. The segment at 250-456 (KHIIVVLDPV…PFKKLRDETT (207 aa)) is nuclease-like domain; forms the post-nick DNA binding interface and is involved in DNA recognition and bending. Positions 476–570 (RGLALVWRRQ…QPHLSLDSAD (95 aa)) are helix-hairpin-helix (2HhH); forms the pre-nick DNA binding interface and is involved in DNA recognition and bending.

Belongs to the EME1/MMS4 family. In terms of assembly, part of the heterodimeric MUS81-EME1 complex.

The protein resides in the nucleus. Its subcellular location is the nucleolus. Non-catalytic subunit of the structure-specific, heterodimeric DNA endonuclease MUS81-EME1 which is involved in the maintenance of genome stability. In the complex, EME1 is required for DNA cleavage, participating in DNA recognition and bending. MUS81-EME1 cleaves 3'-flaps and nicked Holliday junctions, and exhibit limited endonuclease activity with 5' flaps and nicked double-stranded DNAs. Active during prometaphase, MUS81-EME1 resolves mitotic recombination intermediates, including Holliday junctions, which form during homologous recombination. In Homo sapiens (Human), this protein is Structure-specific endonuclease subunit EME1.